The sequence spans 170 residues: Putative beta-eliminating lyase-like protein (170 aa).

Residue K32 is modified to N6-(pyridoxal phosphate)lysine.

It belongs to the beta-eliminating lyase family. It depends on pyridoxal 5'-phosphate as a cofactor.

This is Putative beta-eliminating lyase-like protein from Dictyostelium discoideum (Social amoeba).